A 218-amino-acid chain; its full sequence is Carboxylesterase 2 (218 aa).

Catalysis depends on charge relay system residues S114, D168, and H199.

This sequence belongs to the AB hydrolase superfamily. AB hydrolase 2 family. In terms of assembly, homodimer.

The catalysed reaction is a carboxylic ester + H2O = an alcohol + a carboxylate + H(+). Hydrolyzes carboxylic ester bonds with relatively broad substrate specificity. This is Carboxylesterase 2 (estB) from Pseudomonas fluorescens.